A 2631-amino-acid polypeptide reads, in one-letter code: Cyclic GMP-binding protein C (2631 aa).

6 LRR repeats span residues 170 to 194 (TAQI…IFSL), 196 to 217 (WIQK…IGKL), 218 to 240 (QQLQ…IGDL), 242 to 262 (NLKR…LERL), 263 to 285 (SKLE…IASL), and 287 to 308 (SLKT…VVSK). The region spanning 323 to 515 (GARPCLRSKL…QLIEDIIKTQ (193 aa)) is the Roc domain. GTP contacts are provided by residues 336–343 (GDPGVGKT), 402–406 (DIANQ), and 458–461 (THID). Positions 523–741 (PSSFFTLEEA…ESCQKRAVIL (219 aa)) constitute a COR domain. The 295-residue stretch at 878–1172 (VKINKEVGRG…KKKFAPLPFT (295 aa)) folds into the Protein kinase domain. ATP is bound by residues 884–892 (VGRGAFGIV) and lysine 905. Aspartate 1023 (proton acceptor) is an active-site residue. Polar residues predominate over residues 1225–1250 (ISLTSSGTSPTNSPVGGLLSQSLTQP). 2 disordered regions span residues 1225-1263 (ISLT…ILST) and 1387-1418 (SSAT…RNSV). Low complexity predominate over residues 1251–1263 (ITSGGSTSGILST). The N-terminal Ras-GEF domain maps to 1366 to 1539 (SVSIIIAATM…QIYGTLTTHE (174 aa)). Residues 1392–1404 (KSEHISTRRRSDT) show a composition bias toward basic and acidic residues. A DEP domain is found at 1620–1706 (PLLGITVKEK…SPTSFYMFLE (87 aa)). One can recognise a Ras-GEF domain in the interval 1708-1971 (DPELIARQYT…DLKALDSLQI (264 aa)). Positions 1989–2013 (GTTNDDKEKGDENGGGLTSSNFFGN) are disordered. Residue 2014–2133 (GSDELTERDW…AKFYKIMANQ (120 aa)) coordinates a nucleoside 3',5'-cyclic phosphate. 3 disordered regions span residues 2142 to 2180 (PWSK…GGGL), 2192 to 2239 (MSLS…TTTD), and 2263 to 2346 (SANL…GQQP). The segment covering 2144-2174 (SKPKNTTGGSSSSNQSAGPDNILGTTPTGIS) has biased composition (low complexity). The segment covering 2212-2221 (LPSPPAPLQS) has biased composition (pro residues). Over residues 2222-2238 (PPTSGISSPTTTTSTTT) the composition is skewed to low complexity. Residues 2287–2299 (TINKDPHQRDSGS) are compositionally biased toward basic and acidic residues. The span at 2321–2336 (GSISYLGRTQTSTSPL) shows a compositional bias: polar residues. Residues 2354-2414 (EFCQRFALVD…KNIDKLICIN (61 aa)) form the GRAM domain. 2490 to 2616 (GDELTKEDWE…ASKWFKYLAT (127 aa)) lines the a nucleoside 3',5'-cyclic phosphate pocket.

Belongs to the protein kinase superfamily. TKL Ser/Thr protein kinase family. ROCO subfamily.

It catalyses the reaction L-seryl-[protein] + ATP = O-phospho-L-seryl-[protein] + ADP + H(+). It carries out the reaction L-threonyl-[protein] + ATP = O-phospho-L-threonyl-[protein] + ADP + H(+). Promotes the exchange of Ras-bound GDP by GTP. Required for cyclic GMP-mediated chemotaxis, polarity. Plays a key role in cyclic AMP-induced myosin II translocation to the cortex. Also involved in the phosphorylation of mlkA and mlcR, either directly or via an intermediate kinase. The sequence is that of Cyclic GMP-binding protein C (gbpC) from Dictyostelium discoideum (Social amoeba).